Consider the following 78-residue polypeptide: Large ribosomal subunit protein bL31 (78 aa).

The protein belongs to the bacterial ribosomal protein bL31 family. Type A subfamily. Part of the 50S ribosomal subunit.

Its function is as follows. Binds the 23S rRNA. The chain is Large ribosomal subunit protein bL31 (rpmE) from Rickettsia felis (strain ATCC VR-1525 / URRWXCal2) (Rickettsia azadi).